Here is a 168-residue protein sequence, read N- to C-terminus: GPI-anchored protein LLG1 (168 aa).

Positions 1 to 23 (MELLSRALFFFLLLSVLSSFSSS) are cleaved as a signal peptide. An N-linked (GlcNAc...) asparagine glycan is attached at Asn-57. A lipid anchor (GPI-anchor amidated asparagine) is attached at Asn-144. The propeptide at 145–168 (AATTSSSRLWLTVSAALLVFVKLF) is removed in mature form.

In terms of assembly, interacts with FER. As to expression, expressed in pollen, pollen tubes, sporophytic pistil tissues, in the early stages of female gametophyte development, and in unfertilized, mature ovules. Expressed in roots, lateral roots, shoots, cotyledons, petioles, developing leaves and anther filaments.

It is found in the cell membrane. Functionally, component of the FER-regulated Rho GTPase signaling complex. Acts as a chaperone and coreceptor for FER. Required for localization of FER to the plasma membrane. This chain is GPI-anchored protein LLG1, found in Arabidopsis thaliana (Mouse-ear cress).